We begin with the raw amino-acid sequence, 173 residues long: Lens fiber membrane intrinsic protein (173 aa).

The Cytoplasmic portion of the chain corresponds to methionine 1–serine 3. Residues phenylalanine 4–alanine 24 form a helical membrane-spanning segment. Residues threonine 25–alanine 66 lie on the Extracellular side of the membrane. 2 C-linked (Man) tryptophan glycosylation sites follow: tryptophan 43 and tryptophan 61. N-linked (GlcNAc...) asparagine glycosylation is present at asparagine 62. Residues phenylalanine 67 to alanine 87 traverse the membrane as a helical segment. The Cytoplasmic portion of the chain corresponds to histidine 88–proline 98. A helical transmembrane segment spans residues phenylalanine 99–tyrosine 119. At threonine 120–tyrosine 140 the chain is on the extracellular side. The chain crosses the membrane as a helical span at residues isoleucine 141 to tyrosine 161. Topologically, residues arginine 162–arginine 173 are cytoplasmic. Serine 170 carries the post-translational modification Phosphoserine. Phosphothreonine is present on threonine 171.

This sequence belongs to the PMP-22/EMP/MP20 family. As to quaternary structure, seems to be associated with itself or another lens membrane component via disulfide bonds. In terms of tissue distribution, eye lens specific.

It is found in the membrane. Present in the thicker 16-17 nm junctions of mammalian lens fiber cells, where it may contribute to cell junctional organization. Acts as a receptor for calmodulin. May play an important role in both lens development and cataractogenesis. In Homo sapiens (Human), this protein is Lens fiber membrane intrinsic protein (LIM2).